The following is a 274-amino-acid chain: Urease accessory protein UreD (274 aa).

The protein belongs to the UreD family. UreD, UreF and UreG form a complex that acts as a GTP-hydrolysis-dependent molecular chaperone, activating the urease apoprotein by helping to assemble the nickel containing metallocenter of UreC. The UreE protein probably delivers the nickel.

It is found in the cytoplasm. Required for maturation of urease via the functional incorporation of the urease nickel metallocenter. The polypeptide is Urease accessory protein UreD (Klebsiella pneumoniae subsp. pneumoniae (strain ATCC 700721 / MGH 78578)).